The chain runs to 180 residues: MSRIGRLPIPVPKGVSVEVAPGRVKVKGPKGELEVPVSPEMRVVVEEGVVRVERPSDERRHKSLHGLTRTLIANAVKGVSEGYSKELLIKGIGYRARLVGRALELTVGFSHPVVVEPPEGITFEVPEPTRVRVSGIDKQKVGQVAANIRAIRKPSAYHEKGIYYAGEPVRLKPGKAGAKK.

This sequence belongs to the universal ribosomal protein uL6 family. In terms of assembly, part of the 50S ribosomal subunit.

In terms of biological role, this protein binds to the 23S rRNA, and is important in its secondary structure. It is located near the subunit interface in the base of the L7/L12 stalk, and near the tRNA binding site of the peptidyltransferase center. This chain is Large ribosomal subunit protein uL6, found in Thermus thermophilus (strain ATCC BAA-163 / DSM 7039 / HB27).